Here is a 1409-residue protein sequence, read N- to C-terminus: Inositol hexakisphosphate and diphosphoinositol-pentakisphosphate kinase 1 (1409 aa).

Residue 64–65 (KK) participates in substrate binding. ATP is bound by residues Arg145, Lys198, His205, Arg224, 248-251 (EEFM), and 257-259 (DVK). 224–225 (RK) is a substrate binding site. Residues Lys259 and Arg273 each contribute to the substrate site. ATP is bound by residues Ser275, Asp320, and 332-334 (DVN). 337–340 (SFVK) contributes to the substrate binding site. The segment at 382-453 (PTTSGTMMEL…VLDITRLLLA (72 aa)) is polyphosphoinositide-binding domain. The disordered stretch occupies residues 891-996 (GVEEEGSAPA…PTEMKQSGLG (106 aa)). Phosphoserine occurs at positions 920 and 963. Over residues 981-996 (FSSSRPPTEMKQSGLG) the composition is skewed to polar residues. 2 positions are modified to phosphoserine: Ser1013 and Ser1049. The segment covering 1110–1119 (MHSSQASDNP) has biased composition (polar residues). The tract at residues 1110–1183 (MHSSQASDNP…PSLNSHVAEE (74 aa)) is disordered. 2 positions are modified to phosphoserine: Ser1121 and Ser1128. Over residues 1144–1162 (SSGPSSTVSSAGPSSPTTV) the composition is skewed to low complexity. Residues 1163–1178 (DGNSQFGFSDQPSLNS) are compositionally biased toward polar residues.

The protein belongs to the histidine acid phosphatase family. VIP1 subfamily.

It localises to the cytoplasm. It is found in the cytosol. Its subcellular location is the cell membrane. The enzyme catalyses 1D-myo-inositol hexakisphosphate + ATP = 1-diphospho-1D-myo-inositol 2,3,4,5,6-pentakisphosphate + ADP. It catalyses the reaction 5-diphospho-1D-myo-inositol 1,2,3,4,6-pentakisphosphate + ATP + H(+) = 1,5-bis(diphospho)-1D-myo-inositol 2,3,4,6-tetrakisphosphate + ADP. Functionally, bifunctional inositol kinase that acts in concert with the IP6K kinases IP6K1, IP6K2 and IP6K3 to synthesize the diphosphate group-containing inositol pyrophosphates diphosphoinositol pentakisphosphate, PP-InsP5, and bis-diphosphoinositol tetrakisphosphate, (PP)2-InsP4. PP-InsP5 and (PP)2-InsP4, also respectively called InsP7 and InsP8, regulate a variety of cellular processes, including apoptosis, vesicle trafficking, cytoskeletal dynamics, exocytosis, insulin signaling and neutrophil activation. Phosphorylates inositol hexakisphosphate (InsP6) at position 1 to produce PP-InsP5 which is in turn phosphorylated by IP6Ks to produce (PP)2-InsP4. Alternatively, phosphorylates PP-InsP5 at position 1, produced by IP6Ks from InsP6, to produce (PP)2-InsP4. Activated when cells are exposed to hyperosmotic stress. This is Inositol hexakisphosphate and diphosphoinositol-pentakisphosphate kinase 1 from Pongo abelii (Sumatran orangutan).